Here is an 82-residue protein sequence, read N- to C-terminus: MVLVQDLLHPTAASEARKHKLKTLVQGPRSYFLDVKCPGCLNITTVFSHAQTAVTCESCSTVLCTPTGGKAKLSEGTSFRRK.

The C4-type zinc-finger motif lies at 37 to 59; that stretch reads CPGCLNITTVFSHAQTAVTCESC.

It belongs to the eukaryotic ribosomal protein eS27 family. In terms of assembly, component of the small ribosomal subunit (SSU). Mature yeast ribosomes consist of a small (40S) and a large (60S) subunit. The 40S small subunit contains 1 molecule of ribosomal RNA (18S rRNA) and 33 different proteins (encoded by 57 genes). The large 60S subunit contains 3 rRNA molecules (25S, 5.8S and 5S rRNA) and 46 different proteins (encoded by 81 genes). It depends on Zn(2+) as a cofactor. Post-translationally, the N-terminus is not modified.

The protein resides in the cytoplasm. Component of the ribosome, a large ribonucleoprotein complex responsible for the synthesis of proteins in the cell. The small ribosomal subunit (SSU) binds messenger RNAs (mRNAs) and translates the encoded message by selecting cognate aminoacyl-transfer RNA (tRNA) molecules. The large subunit (LSU) contains the ribosomal catalytic site termed the peptidyl transferase center (PTC), which catalyzes the formation of peptide bonds, thereby polymerizing the amino acids delivered by tRNAs into a polypeptide chain. The nascent polypeptides leave the ribosome through a tunnel in the LSU and interact with protein factors that function in enzymatic processing, targeting, and the membrane insertion of nascent chains at the exit of the ribosomal tunnel. This Saccharomyces cerevisiae (strain ATCC 204508 / S288c) (Baker's yeast) protein is Small ribosomal subunit protein eS27B.